Here is a 55-residue protein sequence, read N- to C-terminus: Large ribosomal subunit protein bL33 (55 aa).

Belongs to the bacterial ribosomal protein bL33 family.

The chain is Large ribosomal subunit protein bL33 from Bartonella henselae (strain ATCC 49882 / DSM 28221 / CCUG 30454 / Houston 1) (Rochalimaea henselae).